The primary structure comprises 317 residues: MPVQGSQRRLLGSLNSTPTATPHLGLAANQTGARCLEVSVPDGLFLSLGLVSLVENVLVVTAIAKNRNLHSPMYCFICCLALSDLLVSGSNMLETAVTLLLEAGALAARAAVVQQLDNVIDVITCSSMLSSLCFLGAIAVDRYISIFYALRYHSIVTLPRARRAVAAIWVASVLCSTLFIAYYDHAAVLLCLVVFFLAMLVLMAVLYVHMLARACQHAQGIARLHKRQRLAHQGFGLKGAATLTILLGIFFLCWGPFFLHLTLIVLCPQHPTCSCIFKNFNLFLALIICNAIIDPLIYAFRSQELRRTLKEVLLCSW.

Topologically, residues Met-1–Glu-37 are extracellular. Asn-29 carries N-linked (GlcNAc...) asparagine glycosylation. The chain crosses the membrane as a helical span at residues Val-38–Ile-63. At Ala-64–Pro-72 the chain is on the cytoplasmic side. A helical transmembrane segment spans residues Met-73–Leu-93. The Extracellular portion of the chain corresponds to Glu-94–Asn-118. A helical membrane pass occupies residues Val-119–Val-140. Residues Asp-141–Arg-163 are Cytoplasmic-facing. A helical transmembrane segment spans residues Ala-164–Tyr-183. The Extracellular segment spans residues Asp-184–Cys-191. The helical transmembrane segment at Leu-192–Leu-211 threads the bilayer. The Cytoplasmic segment spans residues Ala-212–Ala-240. The chain crosses the membrane as a helical span at residues Ala-241–Leu-266. Over Cys-267–Asn-279 the chain is Extracellular. A helical membrane pass occupies residues Phe-280 to Phe-300. At Arg-301–Trp-317 the chain is on the cytoplasmic side. The S-palmitoyl cysteine moiety is linked to residue Cys-315.

It belongs to the G-protein coupled receptor 1 family. Interacts with MGRN1, but does not undergo MGRN1-mediated ubiquitination; this interaction competes with GNAS-binding and thus inhibits agonist-induced cAMP production. Interacts with OPN3; the interaction results in a decrease in MC1R-mediated cAMP signaling and ultimately a decrease in melanin production in melanocytes.

The protein resides in the cell membrane. In terms of biological role, receptor for MSH (alpha, beta and gamma) and ACTH. The activity of this receptor is mediated by G proteins which activate adenylate cyclase. Mediates melanogenesis, the production of eumelanin (black/brown) and phaeomelanin (red/yellow), via regulation of cAMP signaling in melanocytes. This chain is Melanocyte-stimulating hormone receptor (MC1R), found in Macaca sylvanus (Barbary macaque).